We begin with the raw amino-acid sequence, 464 residues long: Myrosinase 1 (464 aa).

Q19 contributes to the substrate binding site. Zn(2+) is bound by residues H39 and D52. The substrate site is built by H122 and N166. E167 functions as the Nucleophile in the catalytic mechanism. E374 functions as the Proton donor in the catalytic mechanism. N397 is a glycosylation site (N-linked (GlcNAc...) asparagine).

In terms of assembly, homodimer. In terms of tissue distribution, expressed in the skeletal muscle tissues surrounding the head, abdomen and thorax. Not expressed in flight muscles (at protein level).

It carries out the reaction a thioglucoside + H2O = a sugar + a thiol.. Hydrolyzes glucosinolates to a labile aglycone. This rapidly undergoes spontaneous rearrangement, eliminating sulfur to yield a number of toxic metabolites. Thereby developing a chemical defense system that exploits and mimics the host plant. This Brevicoryne brassicae (Mealy cabbage aphid) protein is Myrosinase 1.